The chain runs to 155 residues: Small ribosomal subunit protein bS6 (155 aa).

A disordered region spans residues 94–155; it reads EKHEEGPSAM…RPRRPREDRV (62 aa).

This sequence belongs to the bacterial ribosomal protein bS6 family.

In terms of biological role, binds together with bS18 to 16S ribosomal RNA. This is Small ribosomal subunit protein bS6 from Rhizobium leguminosarum bv. trifolii (strain WSM2304).